A 1086-amino-acid chain; its full sequence is Endo-1,4-beta-xylanase C (1086 aa).

An N-terminal signal peptide occupies residues methionine 1–alanine 31. 2 consecutive CBM-cenC domains span residues glycine 35–valine 183 and glycine 197–threonine 359. The GH10 domain maps to glutamate 365–proline 710. Glutamate 502 acts as the Proton donor in catalysis. Aspartate 556 is a catalytic residue. The active-site Nucleophile is the glutamate 620.

This sequence belongs to the glycosyl hydrolase 10 (cellulase F) family.

The catalysed reaction is Endohydrolysis of (1-&gt;4)-beta-D-xylosidic linkages in xylans.. The protein operates within glycan degradation; xylan degradation. Its function is as follows. Endoxylanase with high hydrolytic activity on birchwood and oat spelt xylan. Xylotetraose, xylotriose, xylobiose and xylose are the main products from birchwood xylan hydrolysis. Shows increasing activity on xylo-oligosaccharides of increasing length. Displays very low hydrolytic activity on Avicel, carboxymethylcellulose (CMC) and p-nitrophenyl-beta-xylopyranoside. Also shows transxylosidase activity, allowing the formation of xylo-oligosaccharides of higher degree of polymerization than the starting substrate. The chain is Endo-1,4-beta-xylanase C (xynC) from Paenibacillus barcinonensis.